We begin with the raw amino-acid sequence, 728 residues long: Catalase B (728 aa).

Positions 1–15 (MRLTFIPSLIGVANA) are cleaved as a signal peptide. Positions 16 to 27 (VCPYMTGELNRR) are excised as a propeptide. The active site involves histidine 102. Residue asparagine 120 is glycosylated (N-linked (GlcNAc...) asparagine). The active site involves asparagine 175. Tyrosine 389 lines the heme pocket. N-linked (GlcNAc...) asparagine glycans are attached at residues asparagine 448 and asparagine 551.

Belongs to the catalase family. Homotetramer. Requires heme as cofactor. N-glycosylated.

It localises to the secreted. The enzyme catalyses 2 H2O2 = O2 + 2 H2O. Occurs in almost all aerobically respiring organisms and serves to protect cells from the toxic effects of hydrogen peroxide. The chain is Catalase B (catB) from Aspergillus fumigatus (strain ATCC MYA-4609 / CBS 101355 / FGSC A1100 / Af293) (Neosartorya fumigata).